A 206-amino-acid polypeptide reads, in one-letter code: Elongation factor 1-beta (206 aa).

An N-acetylalanine modification is found at Ala2. Residue Lys13 forms a Glycyl lysine isopeptide (Lys-Gly) (interchain with G-Cter in ubiquitin) linkage. Phosphoserine occurs at positions 31 and 86.

Belongs to the EF-1-beta/EF-1-delta family. In terms of assembly, the eukaryotic elongation factor 1 complex (eEF1) is probably a heterohexamer. Two trimeric complexes, each composed of eEF1A (TEF1 or TEF2), eEF1Balpha (EFB1) and eEF1Bgamma (CAM1 or TEF4), are probably dimerized via the eF1Bgamma subunits. eEF1Balpha interacts directly with eEF1A. eEF1Balpha and eEF1Bgamma form the eEF1B subcomplex with the GEF activity. S-thiolated in response to oxidative stress, probably inhibiting the protein and causing a reduction in protein synthesis.

Its pathway is protein biosynthesis; polypeptide chain elongation. Catalytic subunit of the guanine nucleotide exchange factor (GEF) (eEF1B subcomplex) of the eukaryotic elongation factor 1 complex (eEF1). Stimulates the exchange of GDP for GTP on elongation factor 1A (eEF1A), probably by displacing GDP from the nucleotide binding pocket in eEF1A. The 30-fold higher concentration of GTP compared to GDP in cells favors the formation of eEF1A-GTP, which rapidly forms a ternary complex with aminoacyl-tRNA that in turn displaces eEF1B from the complex. In Saccharomyces cerevisiae (strain ATCC 204508 / S288c) (Baker's yeast), this protein is Elongation factor 1-beta (EFB1).